Here is a 625-residue protein sequence, read N- to C-terminus: Pentatricopeptide repeat-containing protein At2g36980, mitochondrial (625 aa).

The transit peptide at M1–L7 directs the protein to the mitochondrion. 15 PPR repeats span residues V3–L33, D34–P68, D69–A103, S104–D134, N137–R167, V168–P202, D203–S238, A239–L269, T270–K300, N301–S335, D336–G370, Y371–K401, D402–P436, D437–P471, and E473–L503. Residues S512–G587 are type E motif. The tract at residues N588–R618 is type E(+) motif.

This sequence belongs to the PPR family. PCMP-E subfamily.

The protein resides in the mitochondrion. The polypeptide is Pentatricopeptide repeat-containing protein At2g36980, mitochondrial (PCMP-E73) (Arabidopsis thaliana (Mouse-ear cress)).